The chain runs to 795 residues: Protocadherin beta-5 (795 aa).

The signal sequence occupies residues 1 to 30 (METALAKTPQKRQVMFLAILLLLWEAGSEA). Residues 31-689 (VRYSIPEETE…AQADSLTVYL (659 aa)) are Extracellular-facing. 5 Cadherin domains span residues 35-133 (IPEE…SPEF), 138-242 (MLLK…APEF), 247-346 (YEVQ…APEL), 351-450 (LSSP…APAF), and 455-560 (YTLF…SPFV). The N-linked (GlcNAc...) asparagine glycan is linked to N169. Residue K296 is modified to N6-acetyllysine. N-linked (GlcNAc...) asparagine glycans are attached at residues N417 and N435. N566 carries an N-linked (GlcNAc...) asparagine glycan. Positions 567–670 (GSAPCTELVP…LVDGFSQPYL (104 aa)) constitute a Cadherin 6 domain. A helical membrane pass occupies residues 690 to 710 (VVALASVSSLFLFSVLLFVAV). Residues 711–795 (RLCRRSRAAP…AAFRNSFGLN (85 aa)) lie on the Cytoplasmic side of the membrane.

It is found in the cell membrane. Its function is as follows. Potential calcium-dependent cell-adhesion protein. May be involved in the establishment and maintenance of specific neuronal connections in the brain. The sequence is that of Protocadherin beta-5 (PCDHB5) from Pan troglodytes (Chimpanzee).